A 529-amino-acid polypeptide reads, in one-letter code: G-protein coupled receptor 161 (529 aa).

The Extracellular portion of the chain corresponds to 1-30; the sequence is MSLNSSLSCRKELSNLTEEEGGEGGVIITQ. Asn-4 and Asn-15 each carry an N-linked (GlcNAc...) asparagine glycan. The chain crosses the membrane as a helical span at residues 31–51; the sequence is FIAIIVITIFVCLGNLVIVVT. Over 52-64 the chain is Cytoplasmic; the sequence is LYKKSYLLTLSNK. A helical transmembrane segment spans residues 65–85; the sequence is FVFSLTLSNFLLSVLVLPFVV. The Extracellular segment spans residues 86-101; that stretch reads TSSIRREWIFGVVWCN. Residues Cys-100 and Cys-178 are joined by a disulfide bond. Residues 102-123 form a helical membrane-spanning segment; it reads FSALLYLLISSASMLTLGVIAI. Residues 124–143 lie on the Cytoplasmic side of the membrane; the sequence is DRYYAVLYPMVYPMKITGNR. The chain crosses the membrane as a helical span at residues 144 to 164; sequence AVMALVYIWLHSLIGCLPPLF. Residues 165-190 lie on the Extracellular side of the membrane; the sequence is GWSSVEFDEFKWMCVAAWHREPGYTA. The chain crosses the membrane as a helical span at residues 191–211; it reads FWQIWCALFPFLVMLVCYGFI. Over 212-269 the chain is Cytoplasmic; the sequence is FRVARVKARKVHCGTVVIVEEDAQRTGRKNSSTSTSSSGSRRNAFQGVVYSANQCKAL. Residues 270–290 traverse the membrane as a helical segment; the sequence is ITILVVLGAFMVTWGPYMVVI. Residues 291–306 lie on the Extracellular side of the membrane; it reads ASEALWGKSSVSPSLE. The helical transmembrane segment at 307–327 threads the bilayer; that stretch reads TWATWLSFASAVCHPLIYGLW. Over 328-529 the chain is Cytoplasmic; it reads NKTVRKELLG…EGDVLAAEQR (202 aa).

This sequence belongs to the G-protein coupled receptor 1 family.

The protein resides in the cell projection. It is found in the cilium membrane. It localises to the cell membrane. Its function is as follows. Key negative regulator of Shh signaling, which promotes the processing of GLI3 into GLI3R during neural tube development. Recruited by TULP3 and the IFT-A complex to primary cilia and acts as a regulator of the PKA-dependent basal repression machinery in Shh signaling by increasing cAMP levels, leading to promote the PKA-dependent processing of GLI3 into GLI3R and repress the Shh signaling. In presence of SHH, it is removed from primary cilia and is internalized into recycling endosomes, preventing its activity and allowing activation of the Shh signaling. Its ligand is unknown. The sequence is that of G-protein coupled receptor 161 (GPR161) from Homo sapiens (Human).